Consider the following 1079-residue polypeptide: DNA-directed RNA polymerase subunit beta (1079 aa).

Residues 963 to 982 (RSTGPYSRVTQQPVKGRARR) form a disordered region. The segment covering 966–975 (GPYSRVTQQP) has biased composition (polar residues).

Belongs to the RNA polymerase beta chain family. In terms of assembly, in plastids the minimal PEP RNA polymerase catalytic core is composed of four subunits: alpha, beta, beta', and beta''. When a (nuclear-encoded) sigma factor is associated with the core the holoenzyme is formed, which can initiate transcription.

The protein localises to the plastid. The protein resides in the chloroplast. It catalyses the reaction RNA(n) + a ribonucleoside 5'-triphosphate = RNA(n+1) + diphosphate. DNA-dependent RNA polymerase catalyzes the transcription of DNA into RNA using the four ribonucleoside triphosphates as substrates. In Pelargonium hortorum (Common geranium), this protein is DNA-directed RNA polymerase subunit beta.